A 1286-amino-acid polypeptide reads, in one-letter code: ABC transporter B family member 4 (1286 aa).

A disordered region spans residues 1 to 39; that stretch reads MASESGLNGDPNILEEVSETKRDKEEEEEVKKTEKKDEE. Residues 18 to 39 show a composition bias toward basic and acidic residues; it reads SETKRDKEEEEEVKKTEKKDEE. A helical transmembrane segment spans residues 60-80; it reads FLLMILGTLGSIGNGLGFPLM. The region spanning 63 to 349 is the ABC transmembrane type-1 1 domain; the sequence is MILGTLGSIG…TSPCLSAFAA (287 aa). N-linked (GlcNAc...) asparagine glycans are attached at residues Asn94 and Asn97. 5 consecutive transmembrane segments (helical) span residues 109-129, 186-206, 208-228, 288-308, and 317-337; these read FVWLGIGTFAAAFLQLSGWMI, IQLLATFVGGFVIAFVRGWLL, LVMLSSIPLLVMAGALLAIVI, GLGLGTLFLVVFCSYALAVWY, and GYTGGQVLNIIIAVLTGSMSL. An ABC transporter 1 domain is found at 384–620; sequence IELKDVYFTY…PEGAYSQLIR (237 aa). 419–426 contacts ATP; that stretch reads GQSGSGKS. Residues Asn500 and Asn571 are each glycosylated (N-linked (GlcNAc...) asparagine). Over residues 625–636 the composition is skewed to basic and acidic residues; that stretch reads KKSDENAAEEQK. Positions 625 to 669 are disordered; that stretch reads KKSDENAAEEQKMSSIESFKQSSLRKSSLGRSLSKGGSSRGNSSR. The segment covering 646-669 has biased composition (low complexity); sequence SSLRKSSLGRSLSKGGSSRGNSSR. N-linked (GlcNAc...) asparagine glycosylation occurs at Asn666. Ser671 is subject to Phosphoserine. The ABC transmembrane type-1 2 domain maps to 720–1007; sequence LILGSISAAA…SSSLSPDSSK (288 aa). 2 helical membrane passes run 721–741 and 764–784; these read ILGSISAAANGVILPIFGILI and IIFMVLGFASIIAYPAQTFFF. Asn816 and Asn846 each carry an N-linked (GlcNAc...) asparagine glycan. A run of 4 helical transmembrane segments spans residues 850–870, 871–891, 942–962, and 976–996; these read ILAGLIIAFLACWQLAFVVLA, MLPLIALNGFLYMKFMKGFSA, GIVSGIGFGFSFFVLFSSYAA, and TTFDSVFRVFFALTMAAMAIS. The ABC transporter 2 domain maps to 1042–1279; the sequence is IELRHVSFKY…KDGVYASLVQ (238 aa). An ATP-binding site is contributed by 1077-1084; it reads GESGSGKS. 2 N-linked (GlcNAc...) asparagine glycosylation sites follow: Asn1131 and Asn1230.

It belongs to the ABC transporter superfamily. ABCB family. Multidrug resistance exporter (TC 3.A.1.201) subfamily. Interacts with 1-naphthylphthalamic acid (NPA). In terms of processing, phosphorylation level varies significantly during early response to bacterial elicitor. Mostly expressed in roots, especially in the root elongation zone and lateral roots. In mature portion of the root, expressed in the epidermis and cortex. In the root elongation zone, confined to epidermis. In root tips, present in the root cap, S3 columella and epidermal cells.

The protein localises to the cell membrane. Its function is as follows. Auxin influx transporter that mediates the transport of auxin in roots. Contributes to the basipetal transport in hypocotyls and root tips by establishing an auxin uptake sink in the root cap. Confers sensitivity to 1-N-naphthylphthalamic acid (NPA). Regulates the root elongation, the initiation of lateral roots and the development of root hairs. Can transport IAA, indole-3-propionic acid, NPA syringic acid, vanillic acid and some auxin metabolites, but not 2,4-D and 1-naphthaleneacetic acid. This Arabidopsis thaliana (Mouse-ear cress) protein is ABC transporter B family member 4 (ABCB4).